A 599-amino-acid chain; its full sequence is Elongation factor 4 (599 aa).

One can recognise a tr-type G domain in the interval 2–184; it reads KNIRNFSIIA…RLVRDIPPPE (183 aa). Residues 14 to 19 and 131 to 134 contribute to the GTP site; these read DHGKST and NKID.

The protein belongs to the TRAFAC class translation factor GTPase superfamily. Classic translation factor GTPase family. LepA subfamily.

It localises to the cell inner membrane. It catalyses the reaction GTP + H2O = GDP + phosphate + H(+). Required for accurate and efficient protein synthesis under certain stress conditions. May act as a fidelity factor of the translation reaction, by catalyzing a one-codon backward translocation of tRNAs on improperly translocated ribosomes. Back-translocation proceeds from a post-translocation (POST) complex to a pre-translocation (PRE) complex, thus giving elongation factor G a second chance to translocate the tRNAs correctly. Binds to ribosomes in a GTP-dependent manner. This is Elongation factor 4 from Citrobacter koseri (strain ATCC BAA-895 / CDC 4225-83 / SGSC4696).